A 328-amino-acid chain; its full sequence is E3 ubiquitin-protein ligase SINA-like 5 (328 aa).

Residues 1 to 77 are disordered; it reads MARSGGNDGH…GSPKSSQPVK (77 aa). 2 stretches are compositionally biased toward acidic residues: residues 10 to 20 and 27 to 62; these read HEEELDPELFE and GYEDGEFEEDEEEFEEEEEELEEEEDEEEEEEENVT. Polar residues predominate over residues 63-77; it reads TDEQSGSPKSSQPVK. An RING-type; degenerate zinc finger spans residues 86–122; it reads CPTCCEPLKRPIYQCSNGHLACSSCCQKLNKKCSFCR. The interval 136–324 is SBD; it reads VIEASIVPCP…MQICIAYGYK (189 aa). Residues 139 to 197 form an SIAH-type; degenerate zinc finger; sequence ASIVPCPNAKHGCKETTTYCNQSSHEKVCKFVRCSCPVSNCNYVSSYSNLKSHACSTAH. Zn(2+) is bound by residues Cys144, Cys151, His163, Cys167, Cys174, Cys179, His191, and His197.

It belongs to the SINA (Seven in absentia) family.

The catalysed reaction is S-ubiquitinyl-[E2 ubiquitin-conjugating enzyme]-L-cysteine + [acceptor protein]-L-lysine = [E2 ubiquitin-conjugating enzyme]-L-cysteine + N(6)-ubiquitinyl-[acceptor protein]-L-lysine.. Its pathway is protein modification; protein ubiquitination. E3 ubiquitin-protein ligase that mediates ubiquitination and subsequent proteasomal degradation of target proteins. E3 ubiquitin ligases accept ubiquitin from an E2 ubiquitin-conjugating enzyme in the form of a thioester and then directly transfers the ubiquitin to targeted substrates. It probably triggers the ubiquitin-mediated degradation of different substrates. The polypeptide is E3 ubiquitin-protein ligase SINA-like 5 (Arabidopsis thaliana (Mouse-ear cress)).